The chain runs to 185 residues: Small ribosomal subunit protein uS4 (185 aa).

The S4 RNA-binding domain occupies 108 to 170 (RRLQTLVYRK…GKSPFVDASH (63 aa)).

It belongs to the universal ribosomal protein uS4 family. In terms of assembly, part of the 30S ribosomal subunit. Contacts protein S5. The interaction surface between S4 and S5 is involved in control of translational fidelity.

One of the primary rRNA binding proteins, it binds directly to 16S rRNA where it nucleates assembly of the body of the 30S subunit. Functionally, with S5 and S12 plays an important role in translational accuracy. This chain is Small ribosomal subunit protein uS4, found in Methanoregula boonei (strain DSM 21154 / JCM 14090 / 6A8).